The sequence spans 142 residues: Centromere protein S (142 aa).

Residues 107 to 142 are disordered; the sequence is LKGKAKKKRKPEDESRSSRESMAEELDGAEELQSES. Positions 116-128 are enriched in basic and acidic residues; it reads KPEDESRSSRESM. Acidic residues predominate over residues 129–142; it reads AEELDGAEELQSES.

This sequence belongs to the TAF9 family. CENP-S/MHF1 subfamily. As to quaternary structure, heterodimer with CENPX, sometimes called MHF; this interaction stabilizes both partners. MHF heterodimers can assemble to form tetrameric structures. MHF also coassemble with CENPT-CENPW heterodimers at centromeres to form the tetrameric CENP-T-W-S-X complex. Forms a discrete complex with FANCM and CENPX, called FANCM-MHF; this interaction, probably mediated by direct binding between CENPS and FANCM, leads to synergistic activation of double-stranded DNA binding and strongly stimulates FANCM-mediated DNA remodeling. Recruited by FANCM to the Fanconi anemia (FA) core complex, which consists of CENPS, CENPX, FANCA, FANCB, FANCC, FANCE, FANCF, FANCG, FANCL, FANCM, FAAP24 and FAAP100. The FA core complex associates with Bloom syndrome (BLM) complex, which consists of at least BLM, DNA topoisomerase 3-alpha (TOP3A), RMI1/BLAP75, RPA1/RPA70 and RPA2/RPA32. The super complex between FA and BLM is called BRAFT. Component of the CENPA-CAD complex, composed of CENPI, CENPK, CENPL, CENPO, CENPP, CENPQ, CENPR and CENPS. The CENPA-CAD complex is probably recruited on centromeres by the CENPA-NAC complex, at least composed of CENPA, CENPC, CENPH, CENPM, CENPN, CENPT and CENPU.

It is found in the nucleus. Its subcellular location is the chromosome. The protein resides in the centromere. The protein localises to the kinetochore. Its function is as follows. DNA-binding component of the Fanconi anemia (FA) core complex. Required for the normal activation of the FA pathway, leading to monoubiquitination of the FANCI-FANCD2 complex in response to DNA damage, cellular resistance to DNA cross-linking drugs, and prevention of chromosomal breakage. In complex with CENPX (MHF heterodimer), crucial cofactor for FANCM in both binding and ATP-dependent remodeling of DNA. Stabilizes FANCM. In complex with CENPX and FANCM (but not other FANC proteins), rapidly recruited to blocked forks and promotes gene conversion at blocked replication forks. In complex with CENPT, CENPW and CENPX (CENP-T-W-S-X heterotetramer), involved in the formation of a functional kinetochore outer plate, which is essential for kinetochore-microtubule attachment and faithful mitotic progression. As a component of MHF and CENP-T-W-S-X complexes, binds DNA and bends it to form a nucleosome-like structure. DNA-binding function is fulfilled in the presence of CENPX, with the following preference for DNA substates: Holliday junction &gt; double-stranded &gt; splay arm &gt; single-stranded. Does not bind DNA on its own. This is Centromere protein S (Cenps) from Mus musculus (Mouse).